The chain runs to 159 residues: Phosphopantetheine adenylyltransferase (159 aa).

Thr10 serves as a coordination point for substrate. ATP-binding positions include 10 to 11 (TF) and His18. Residues Lys42, Leu74, and Arg88 each coordinate substrate. ATP is bound by residues 89–91 (GLR), Glu99, and 124–130 (YAFISSS).

The protein belongs to the bacterial CoaD family. Homohexamer. The cofactor is Mg(2+).

It localises to the cytoplasm. It carries out the reaction (R)-4'-phosphopantetheine + ATP + H(+) = 3'-dephospho-CoA + diphosphate. Its pathway is cofactor biosynthesis; coenzyme A biosynthesis; CoA from (R)-pantothenate: step 4/5. Its function is as follows. Reversibly transfers an adenylyl group from ATP to 4'-phosphopantetheine, yielding dephospho-CoA (dPCoA) and pyrophosphate. This Hydrogenovibrio crunogenus (strain DSM 25203 / XCL-2) (Thiomicrospira crunogena) protein is Phosphopantetheine adenylyltransferase.